The following is a 231-amino-acid chain: Octanoyltransferase (231 aa).

Positions 49–227 constitute a BPL/LPL catalytic domain; sequence PHLPEAVWLL…ALAARFHLAW (179 aa). Substrate contacts are provided by residues 91–98, 158–160, and 171–173; these read RGGEVTHH, AIG, and GLA. The active-site Acyl-thioester intermediate is C189.

Belongs to the LipB family.

It is found in the cytoplasm. The enzyme catalyses octanoyl-[ACP] + L-lysyl-[protein] = N(6)-octanoyl-L-lysyl-[protein] + holo-[ACP] + H(+). The protein operates within protein modification; protein lipoylation via endogenous pathway; protein N(6)-(lipoyl)lysine from octanoyl-[acyl-carrier-protein]: step 1/2. Its function is as follows. Catalyzes the transfer of endogenously produced octanoic acid from octanoyl-acyl-carrier-protein onto the lipoyl domains of lipoate-dependent enzymes. Lipoyl-ACP can also act as a substrate although octanoyl-ACP is likely to be the physiological substrate. In Parasynechococcus marenigrum (strain WH8102), this protein is Octanoyltransferase.